Consider the following 265-residue polypeptide: Putative cysteine-rich receptor-like protein kinase At4g11521 (265 aa).

The N-terminal stretch at 1–23 (MMLNTLFLPIFLFFLITFDYVST) is a signal peptide. Gnk2-homologous domains are found at residues 24–122 (QTCF…NISF) and 128–241 (MEPS…LYPF). N-linked (GlcNAc...) asparagine glycosylation is found at Asn34, Asn102, and Asn119. N-linked (GlcNAc...) asparagine glycosylation is present at Asn247.

This sequence belongs to the protein kinase superfamily. Ser/Thr protein kinase family. CRK subfamily.

The protein resides in the secreted. This is Putative cysteine-rich receptor-like protein kinase At4g11521 from Arabidopsis thaliana (Mouse-ear cress).